A 60-amino-acid chain; its full sequence is Cytotoxin 5 (60 aa).

Cystine bridges form between cysteine 3–cysteine 21, cysteine 14–cysteine 38, cysteine 42–cysteine 53, and cysteine 54–cysteine 59.

The protein belongs to the three-finger toxin family. Short-chain subfamily. Type IA cytotoxin sub-subfamily. Monomer in solution; Homodimer and oligomer in the presence of negatively charged lipids forming a pore with a size ranging between 20 and 30 Angstroms. As to expression, expressed by the venom gland.

The protein resides in the secreted. It is found in the target cell membrane. Shows cytolytic activity on many different cells by forming pore in lipid membranes. In vivo, increases heart rate or kills the animal by cardiac arrest. In addition, it binds to heparin with high affinity, interacts with Kv channel-interacting protein 1 (KCNIP1) in a calcium-independent manner, and binds to integrin alpha-V/beta-3 (ITGAV/ITGB3) with moderate affinity. The chain is Cytotoxin 5 from Naja annulifera (Banded Egyptian cobra).